Here is a 335-residue protein sequence, read N- to C-terminus: Phenylalanine--tRNA ligase alpha subunit (335 aa).

Glu-262 serves as a coordination point for Mg(2+).

Belongs to the class-II aminoacyl-tRNA synthetase family. Phe-tRNA synthetase alpha subunit type 1 subfamily. As to quaternary structure, tetramer of two alpha and two beta subunits. Mg(2+) is required as a cofactor.

The protein resides in the cytoplasm. The enzyme catalyses tRNA(Phe) + L-phenylalanine + ATP = L-phenylalanyl-tRNA(Phe) + AMP + diphosphate + H(+). The chain is Phenylalanine--tRNA ligase alpha subunit from Prochlorococcus marinus (strain MIT 9313).